Reading from the N-terminus, the 142-residue chain is Glia maturation factor beta (142 aa).

The residue at position 2 (Ser2) is an N-acetylserine. The ADF-H domain occupies 4 to 139 (SLVVCDVAED…TEEWLREKLG (136 aa)).

Belongs to the actin-binding proteins ADF family. GMF subfamily. In terms of processing, phosphorylated; stimulated by phorbol ester.

In terms of biological role, this protein causes differentiation of brain cells, stimulation of neural regeneration, and inhibition of proliferation of tumor cells. This chain is Glia maturation factor beta (Gmfb), found in Rattus norvegicus (Rat).